A 551-amino-acid chain; its full sequence is Synapse-associated protein of 47 kDa (551 aa).

Disordered regions lie at residues 20 to 72 (AGDE…AGKR) and 117 to 198 (AMPA…GQGK). Low complexity-rich tracts occupy residues 26-59 (PAPT…AAAA), 117-128 (AMPAMPSIPSIP), and 137-146 (DGAEGAEGAV). Residues serine 178 and serine 182 each carry the phosphoserine modification. Residues 182-197 (SGGGTPTGDEGQIGQG) are compositionally biased toward gly residues. Threonine 186 is subject to Phosphothreonine. The region spanning 295-347 (VDFEFSYDTAYPTAIAIMAEDKALETMRFELVPKIITEENFWRNYFYRVSLII) is the BSD domain. Residues 360-391 (VGQASSGEDANEVATKEKKSKTAEPAKGDSSV) form a disordered region. Over residues 373-386 (ATKEKKSKTAEPAK) the composition is skewed to basic and acidic residues. Serine 433 carries the phosphoserine modification. Positions 487–551 (KDYEVVDEGG…DLIEDTDDLK (65 aa)) are disordered. Positions 514–523 (DDTEADEDEP) are enriched in acidic residues. Residues 524-535 (TISNLRTRSTNN) are compositionally biased toward polar residues. Residue threonine 530 is modified to Phosphothreonine. Positions 536 to 551 (DWEEYADLIEDTDDLK) are enriched in acidic residues.

Expressed specifically in neurons and transported to synaptic terminals.

The chain is Synapse-associated protein of 47 kDa (Sap47) from Drosophila melanogaster (Fruit fly).